The chain runs to 444 residues: N-succinylarginine dihydrolase (444 aa).

Substrate contacts are provided by residues 19-28 (AGLSFGNVAS), N110, and 137-138 (HR). The active site involves E174. A substrate-binding site is contributed by R214. Residue H250 is part of the active site. Substrate contacts are provided by D252 and N362. Residue C368 is the Nucleophile of the active site.

It belongs to the succinylarginine dihydrolase family. As to quaternary structure, homodimer.

The catalysed reaction is N(2)-succinyl-L-arginine + 2 H2O + 2 H(+) = N(2)-succinyl-L-ornithine + 2 NH4(+) + CO2. It participates in amino-acid degradation; L-arginine degradation via AST pathway; L-glutamate and succinate from L-arginine: step 2/5. Functionally, catalyzes the hydrolysis of N(2)-succinylarginine into N(2)-succinylornithine, ammonia and CO(2). This Shewanella baltica (strain OS155 / ATCC BAA-1091) protein is N-succinylarginine dihydrolase.